The chain runs to 542 residues: MGNQCQNGTLGSDYHNRFPREHAVGYVQGDSYLDLKKFDDTWPEVNNFKPTAASILRRGLDPTSINVLGRKTADLREHYIIGRKLGQGQFGTTYLCTEINTGCEYACKTIPKRKLITKEDVEDVRREIQIMHHLSGHKNVVAIKDVYEDGQAVHIVMELCAGGELFDRIQEKGHYSERKAAELIRIIVSIVAMCHSLGVMHRDLKPENFLLLDKDDDLSIKAIDFGLSVFFKPGQVFTELVGSPYYVAPEVLHKRYGPESDVWSAGVILYVLLSGVPPFWAETQQGIFDAVLKGHIDFQSDPWPKISDSAKDLIRKMLSHCPSERLKAHEVLRHPWICENGVATDQALDPSVISRLKQFSAMNKLKKLALRVIAERLSEEEIAGLREMFKAVDTKNRGVITFGELREGLRRFGAEFKDTEIGDIMEAAHNDNNVTIHYEEFIAATLPLNKIEREEHLLAAFTYFDKDGSGYITVDKLQRACGEHNMEDSLLEEIISEVDQNNDGQIDYAEFVAMMQGSNVGLGWQTMESSLNVALRDAPQVH.

Gly2 is lipidated: N-myristoyl glycine. The Protein kinase domain maps to Tyr79 to Ile337. ATP is bound by residues Leu85–Thr93 and Lys108. Residue Asp203 is the Proton acceptor of the active site. Residues Ala343–Ile373 form an autoinhibitory domain region. Residues Glu380–Glu415 enclose the EF-hand 1 domain. Ca(2+)-binding residues include Asp393, Glu404, Asp431, Asn433, Thr435, Glu440, Asp465, Asp467, Ser469, Tyr471, Lys476, Asp499, Asn501, Asp503, Gln505, and Glu510. The region spanning Phe416–Ile451 is the EF-hand 2; degenerate domain. EF-hand domains follow at residues Glu452–Glu487 and Asp488–Gly521.

Belongs to the protein kinase superfamily. Ser/Thr protein kinase family. CDPK subfamily. As to expression, expressed in roots. Expressed in leaf sheaths.

Its subcellular location is the membrane. The protein resides in the cytoplasm. It is found in the cytosol. The enzyme catalyses L-seryl-[protein] + ATP = O-phospho-L-seryl-[protein] + ADP + H(+). It catalyses the reaction L-threonyl-[protein] + ATP = O-phospho-L-threonyl-[protein] + ADP + H(+). Its activity is regulated as follows. Activated by calcium. Autophosphorylation may play an important role in the regulation of the kinase activity. In terms of biological role, may play a role in signal transduction pathways that involve calcium as a second messenger. May be a signaling component in the response to gibberellin and cold stress. The polypeptide is Calcium-dependent protein kinase 7 (Oryza sativa subsp. japonica (Rice)).